The following is a 583-amino-acid chain: Probable lysosomal cobalamin transporter (583 aa).

A run of 10 helical transmembrane segments spans residues 8-28 (LIWA…SVFI), 41-61 (VILT…LVPV), 95-115 (IVYY…IPFI), 145-165 (TVSF…VPVA), 188-208 (ALTF…VLYT), 312-332 (LLSG…MLLT), 347-367 (GYIL…VQSA), 375-395 (VIFT…ISAV), 418-438 (LLAT…TSMI), and 506-526 (FFGA…LLVM). Over residues 541 to 552 (LDEDAEEAEEES) the composition is skewed to acidic residues. The segment at 541–562 (LDEDAEEAEEESLLANTRGRAE) is disordered.

This sequence belongs to the LIMR family. LMBRD1 subfamily.

It localises to the lysosome membrane. In terms of biological role, probable lysosomal cobalamin transporter. Required to export cobalamin from lysosomes allowing its conversion to cofactors. The protein is Probable lysosomal cobalamin transporter of Aspergillus oryzae (strain ATCC 42149 / RIB 40) (Yellow koji mold).